The sequence spans 171 residues: Ribosome maturation factor RimM (171 aa).

The 74-residue stretch at 97–170 (EGEYYYHEII…LVTIHVMEGL (74 aa)) folds into the PRC barrel domain.

This sequence belongs to the RimM family. As to quaternary structure, binds ribosomal protein uS19.

It localises to the cytoplasm. An accessory protein needed during the final step in the assembly of 30S ribosomal subunit, possibly for assembly of the head region. Essential for efficient processing of 16S rRNA. May be needed both before and after RbfA during the maturation of 16S rRNA. It has affinity for free ribosomal 30S subunits but not for 70S ribosomes. This Bacillus thuringiensis (strain Al Hakam) protein is Ribosome maturation factor RimM.